The primary structure comprises 128 residues: Aspartate 1-decarboxylase (128 aa).

Catalysis depends on S25, which acts as the Schiff-base intermediate with substrate; via pyruvic acid. S25 is subject to Pyruvic acid (Ser). T57 provides a ligand contact to substrate. Residue Y58 is the Proton donor of the active site. Substrate is bound at residue G73–A75.

The protein belongs to the PanD family. In terms of assembly, heterooctamer of four alpha and four beta subunits. Pyruvate is required as a cofactor. Post-translationally, is synthesized initially as an inactive proenzyme, which is activated by self-cleavage at a specific serine bond to produce a beta-subunit with a hydroxyl group at its C-terminus and an alpha-subunit with a pyruvoyl group at its N-terminus.

It is found in the cytoplasm. The catalysed reaction is L-aspartate + H(+) = beta-alanine + CO2. It participates in cofactor biosynthesis; (R)-pantothenate biosynthesis; beta-alanine from L-aspartate: step 1/1. In terms of biological role, catalyzes the pyruvoyl-dependent decarboxylation of aspartate to produce beta-alanine. The chain is Aspartate 1-decarboxylase from Burkholderia cenocepacia (strain ATCC BAA-245 / DSM 16553 / LMG 16656 / NCTC 13227 / J2315 / CF5610) (Burkholderia cepacia (strain J2315)).